Consider the following 527-residue polypeptide: TnpB-like protein R854 (527 aa).

The segment covering 21-36 (GSKTKKKVFVKKKPPA) has biased composition (basic residues). The disordered stretch occupies residues 21-50 (GSKTKKKVFVKKKPPAKKPPDKKPLKKTTK). Positions 481, 484, 498, and 501 each coordinate Zn(2+).

It in the central section; belongs to the transposase 2 family. This sequence in the C-terminal section; belongs to the transposase 35 family.

The polypeptide is TnpB-like protein R854 (Acanthamoeba polyphaga mimivirus (APMV)).